The chain runs to 384 residues: 1-deoxy-D-xylulose 5-phosphate reductoisomerase (384 aa).

Thr-10, Gly-11, Ser-12, Ile-13, Arg-37, Asn-38, and Asn-124 together coordinate NADPH. Lys-125 provides a ligand contact to 1-deoxy-D-xylulose 5-phosphate. Glu-126 lines the NADPH pocket. Residue Asp-150 participates in Mn(2+) binding. Ser-151, Glu-152, Ser-176, and His-199 together coordinate 1-deoxy-D-xylulose 5-phosphate. Mn(2+) is bound at residue Glu-152. Gly-205 contributes to the NADPH binding site. 4 residues coordinate 1-deoxy-D-xylulose 5-phosphate: Ser-212, Asn-217, Lys-218, and Glu-221. Glu-221 contacts Mn(2+).

Belongs to the DXR family. The cofactor is Mg(2+). Mn(2+) serves as cofactor.

The enzyme catalyses 2-C-methyl-D-erythritol 4-phosphate + NADP(+) = 1-deoxy-D-xylulose 5-phosphate + NADPH + H(+). Its pathway is isoprenoid biosynthesis; isopentenyl diphosphate biosynthesis via DXP pathway; isopentenyl diphosphate from 1-deoxy-D-xylulose 5-phosphate: step 1/6. Functionally, catalyzes the NADPH-dependent rearrangement and reduction of 1-deoxy-D-xylulose-5-phosphate (DXP) to 2-C-methyl-D-erythritol 4-phosphate (MEP). This chain is 1-deoxy-D-xylulose 5-phosphate reductoisomerase, found in Clostridium perfringens (strain SM101 / Type A).